The chain runs to 272 residues: Phosphoribosylformylglycinamidine synthase subunit PurQ (272 aa).

The Glutamine amidotransferase type-1 domain occupies 8 to 272 (VLVMSGYGIN…FKNAVEYFNK (265 aa)). The Nucleophile role is filled by Cys98. Catalysis depends on residues His225, Glu227, and Glu235.

As to quaternary structure, part of the FGAM synthase complex composed of 1 PurL, 1 PurQ and 2 PurS subunits.

Its subcellular location is the cytoplasm. It carries out the reaction N(2)-formyl-N(1)-(5-phospho-beta-D-ribosyl)glycinamide + L-glutamine + ATP + H2O = 2-formamido-N(1)-(5-O-phospho-beta-D-ribosyl)acetamidine + L-glutamate + ADP + phosphate + H(+). The catalysed reaction is L-glutamine + H2O = L-glutamate + NH4(+). Its pathway is purine metabolism; IMP biosynthesis via de novo pathway; 5-amino-1-(5-phospho-D-ribosyl)imidazole from N(2)-formyl-N(1)-(5-phospho-D-ribosyl)glycinamide: step 1/2. Functionally, part of the phosphoribosylformylglycinamidine synthase complex involved in the purines biosynthetic pathway. Catalyzes the ATP-dependent conversion of formylglycinamide ribonucleotide (FGAR) and glutamine to yield formylglycinamidine ribonucleotide (FGAM) and glutamate. The FGAM synthase complex is composed of three subunits. PurQ produces an ammonia molecule by converting glutamine to glutamate. PurL transfers the ammonia molecule to FGAR to form FGAM in an ATP-dependent manner. PurS interacts with PurQ and PurL and is thought to assist in the transfer of the ammonia molecule from PurQ to PurL. This is Phosphoribosylformylglycinamidine synthase subunit PurQ from Methanococcus maripaludis (strain DSM 14266 / JCM 13030 / NBRC 101832 / S2 / LL).